A 473-amino-acid polypeptide reads, in one-letter code: Bifunctional protein HldE (473 aa).

The segment at 1–316 (MILPDFSLAR…AIAIHGQRAP (316 aa)) is ribokinase. ATP is bound at residue 193–196 (NLSE). D262 is a catalytic residue. Residues 342–473 (VTNGCFDLLH…TRIIEAIRNG (132 aa)) form a cytidylyltransferase region.

In the N-terminal section; belongs to the carbohydrate kinase PfkB family. It in the C-terminal section; belongs to the cytidylyltransferase family. As to quaternary structure, homodimer.

It catalyses the reaction D-glycero-beta-D-manno-heptose 7-phosphate + ATP = D-glycero-beta-D-manno-heptose 1,7-bisphosphate + ADP + H(+). The catalysed reaction is D-glycero-beta-D-manno-heptose 1-phosphate + ATP + H(+) = ADP-D-glycero-beta-D-manno-heptose + diphosphate. Its pathway is nucleotide-sugar biosynthesis; ADP-L-glycero-beta-D-manno-heptose biosynthesis; ADP-L-glycero-beta-D-manno-heptose from D-glycero-beta-D-manno-heptose 7-phosphate: step 1/4. It functions in the pathway nucleotide-sugar biosynthesis; ADP-L-glycero-beta-D-manno-heptose biosynthesis; ADP-L-glycero-beta-D-manno-heptose from D-glycero-beta-D-manno-heptose 7-phosphate: step 3/4. Its function is as follows. Catalyzes the phosphorylation of D-glycero-D-manno-heptose 7-phosphate at the C-1 position to selectively form D-glycero-beta-D-manno-heptose-1,7-bisphosphate. In terms of biological role, catalyzes the ADP transfer from ATP to D-glycero-beta-D-manno-heptose 1-phosphate, yielding ADP-D-glycero-beta-D-manno-heptose. The sequence is that of Bifunctional protein HldE from Methylococcus capsulatus (strain ATCC 33009 / NCIMB 11132 / Bath).